We begin with the raw amino-acid sequence, 256 residues long: MDGGGLDEEFINVYPSAFGTHSSRCTSGAPVLSAVDRPTSVCNESISPYFSFPSNIGSGSFTFGCHLENSYKVPQNAVFPPGVAKQNGQFANKPVDHGEASSWLKEFAFYQGCARSYPRIPAFIDLPVVQRAMMGDLRHETCLTMEGHQHWDWSNNCSSQLYCFQDQTRSPHIWKPSLTEEAAAASFCQRGRKKRVPYTKFQLKELEREYNTTKFITKENRRRIASSTNLSERQVTIWFQNRRVKDKKRPDVCIKC.

The segment at residues 191 to 250 is a DNA-binding region (homeobox); sequence GRKKRVPYTKFQLKELEREYNTTKFITKENRRRIASSTNLSERQVTIWFQNRRVKDKKRP.

The protein belongs to the Abd-B homeobox family.

Its subcellular location is the nucleus. Sequence-specific transcription factor which is part of a developmental regulatory system that provides cells with specific positional identities on the anterior-posterior axis. This chain is Homeobox protein Hox-D13a (hoxd13a), found in Danio rerio (Zebrafish).